Reading from the N-terminus, the 567-residue chain is Lipase maturation factor 1 (567 aa).

Positions 1–39 (MRPDSPTMAAPAESLRRRKTGYSDPEPESPPAPGRGPAG) are disordered. Over 1 to 49 (MRPDSPTMAAPAESLRRRKTGYSDPEPESPPAPGRGPAGSPAHLHTGTF) the chain is Cytoplasmic. Residues 50–72 (WLTRIVLLKALAFVYFVAFLVAF) form a helical membrane-spanning segment. At 73 to 127 (HQNKQLIGDRGLLPCRVFLKNFQQYFQDRTSWEVFSYMPTILWLMDWSDMNSNLD) the chain is on the lumenal side. Residues 128–151 (LLALLGLGISSFVLITGCANMLLM) form a helical membrane-spanning segment. Topologically, residues 152–207 (AALWGLYMSLVNVGHVWYSFGWESQLLETGFLGIFLCPLWTLSRLPQHTPTSRIVL) are cytoplasmic. Residues 208 to 221 (WGFRWLIFRIMLGA) form a helical membrane-spanning segment. The Lumenal portion of the chain corresponds to 222–292 (GLIKIRGDRC…LGRRACIIHG (71 aa)). The chain crosses the membrane as a helical span at residues 293–321 (VLQILFQAVLIVSGNLSFLNWLTMVPSLA). Residues 322 to 367 (CFDDATLGFLFPSGPGSLKDRVLQMQRDIRGARPEPRFGSVVRRAA) lie on the Cytoplasmic side of the membrane. A helical membrane pass occupies residues 368–388 (NVSLGVLLAWLSVPVVLNLLS). At 389–567 (SRQVMNTHFN…DRGWPLPGPL (179 aa)) the chain is on the lumenal side.

It belongs to the lipase maturation factor family. As to quaternary structure, interacts with LPL and SEL1L.

Its subcellular location is the endoplasmic reticulum membrane. Its function is as follows. Involved in the maturation of specific proteins in the endoplasmic reticulum. Required for maturation and transport of active lipoprotein lipase (LPL) through the secretory pathway. Each LMF1 molecule chaperones 50 or more molecules of LPL. The polypeptide is Lipase maturation factor 1 (LMF1) (Homo sapiens (Human)).